The primary structure comprises 262 residues: Pyridoxine 5'-phosphate synthase (262 aa).

3-amino-2-oxopropyl phosphate is bound at residue asparagine 6. 8-9 is a 1-deoxy-D-xylulose 5-phosphate binding site; it reads DH. Arginine 17 contacts 3-amino-2-oxopropyl phosphate. The active-site Proton acceptor is the histidine 43. The 1-deoxy-D-xylulose 5-phosphate site is built by arginine 45 and histidine 50. Glutamate 70 functions as the Proton acceptor in the catalytic mechanism. A 1-deoxy-D-xylulose 5-phosphate-binding site is contributed by threonine 102. The active-site Proton donor is histidine 215. 3-amino-2-oxopropyl phosphate contacts are provided by residues glycine 216 and 237-238; that span reads GH.

It belongs to the PNP synthase family. Homooctamer; tetramer of dimers.

It localises to the cytoplasm. It carries out the reaction 3-amino-2-oxopropyl phosphate + 1-deoxy-D-xylulose 5-phosphate = pyridoxine 5'-phosphate + phosphate + 2 H2O + H(+). It participates in cofactor biosynthesis; pyridoxine 5'-phosphate biosynthesis; pyridoxine 5'-phosphate from D-erythrose 4-phosphate: step 5/5. Functionally, catalyzes the complicated ring closure reaction between the two acyclic compounds 1-deoxy-D-xylulose-5-phosphate (DXP) and 3-amino-2-oxopropyl phosphate (1-amino-acetone-3-phosphate or AAP) to form pyridoxine 5'-phosphate (PNP) and inorganic phosphate. The polypeptide is Pyridoxine 5'-phosphate synthase (Helicobacter acinonychis (strain Sheeba)).